The primary structure comprises 347 residues: GMP reductase (347 aa).

108–131 provides a ligand contact to NADP(+); the sequence is DDFTKTRQILAMSTALRFICVDVA. K(+)-binding residues include glycine 181 and glycine 183. Catalysis depends on cysteine 186, which acts as the Thioimidate intermediate. 216–239 is an NADP(+) binding site; it reads IVGDGGCTCPGDVAKAFGGGADFV.

This sequence belongs to the IMPDH/GMPR family. GuaC type 1 subfamily. In terms of assembly, homotetramer.

It carries out the reaction IMP + NH4(+) + NADP(+) = GMP + NADPH + 2 H(+). Its function is as follows. Catalyzes the irreversible NADPH-dependent deamination of GMP to IMP. It functions in the conversion of nucleobase, nucleoside and nucleotide derivatives of G to A nucleotides, and in maintaining the intracellular balance of A and G nucleotides. This Aeromonas salmonicida (strain A449) protein is GMP reductase.